A 427-amino-acid chain; its full sequence is UPF0597 protein CD630_32320 (427 aa).

Belongs to the UPF0597 family.

This Clostridioides difficile (strain 630) (Peptoclostridium difficile) protein is UPF0597 protein CD630_32320.